The sequence spans 307 residues: tRNA dimethylallyltransferase (307 aa).

ATP is bound at residue 10–17; it reads GPTASGKS. 12–17 serves as a coordination point for substrate; the sequence is TASGKS. Interaction with substrate tRNA regions lie at residues 35–38 and 159–163; these read DSMQ and QRLCR.

It belongs to the IPP transferase family. In terms of assembly, monomer. Requires Mg(2+) as cofactor.

It catalyses the reaction adenosine(37) in tRNA + dimethylallyl diphosphate = N(6)-dimethylallyladenosine(37) in tRNA + diphosphate. Its function is as follows. Catalyzes the transfer of a dimethylallyl group onto the adenine at position 37 in tRNAs that read codons beginning with uridine, leading to the formation of N6-(dimethylallyl)adenosine (i(6)A). The protein is tRNA dimethylallyltransferase of Phenylobacterium zucineum (strain HLK1).